The chain runs to 136 residues: Transcription antitermination protein NusB (136 aa).

This sequence belongs to the NusB family.

Involved in transcription antitermination. Required for transcription of ribosomal RNA (rRNA) genes. Binds specifically to the boxA antiterminator sequence of the ribosomal RNA (rrn) operons. The polypeptide is Transcription antitermination protein NusB (Kineococcus radiotolerans (strain ATCC BAA-149 / DSM 14245 / SRS30216)).